The chain runs to 475 residues: Sulfate adenylyltransferase subunit 1 (475 aa).

A tr-type G domain is found at 25–239 (KSLLRFLTCG…EVLETVEIQR (215 aa)). Residues 34–41 (GSVDDGKS) form a G1 region. 34–41 (GSVDDGKS) contributes to the GTP binding site. The segment at 92–96 (GITID) is G2. The interval 113–116 (DTPG) is G3. Residues 113-117 (DTPGH) and 168-171 (NKMD) contribute to the GTP site. Residues 168–171 (NKMD) form a G4 region. The segment at 206–208 (SAL) is G5.

The protein belongs to the TRAFAC class translation factor GTPase superfamily. Classic translation factor GTPase family. CysN/NodQ subfamily. In terms of assembly, heterodimer composed of CysD, the smaller subunit, and CysN.

The enzyme catalyses sulfate + ATP + H(+) = adenosine 5'-phosphosulfate + diphosphate. The protein operates within sulfur metabolism; hydrogen sulfide biosynthesis; sulfite from sulfate: step 1/3. With CysD forms the ATP sulfurylase (ATPS) that catalyzes the adenylation of sulfate producing adenosine 5'-phosphosulfate (APS) and diphosphate, the first enzymatic step in sulfur assimilation pathway. APS synthesis involves the formation of a high-energy phosphoric-sulfuric acid anhydride bond driven by GTP hydrolysis by CysN coupled to ATP hydrolysis by CysD. This is Sulfate adenylyltransferase subunit 1 from Escherichia coli O157:H7.